The chain runs to 120 residues: U13-lycotoxin-Ls1d (120 aa).

Residues 1–16 form the signal peptide; it reads MKILFVLISILYAVYC. A propeptide spanning residues 17 to 54 is cleaved from the precursor; the sequence is FSSEEDVDSAYLANELEPVEDINSEQYAALEPKEEQER. 4 cysteine pairs are disulfide-bonded: Cys-56–Cys-70, Cys-63–Cys-76, Cys-69–Cys-87, and Cys-78–Cys-85. Residues 56 to 95 form the Agouti domain; the sequence is CADMGQDCKDDCDCCLNIATCNCRFGRYFCSCTFGDYQTC.

It belongs to the neurotoxin 05 (agouti) family. Contains 6 disulfide bonds. In terms of tissue distribution, expressed by the venom gland.

The protein resides in the secreted. This is U13-lycotoxin-Ls1d from Lycosa singoriensis (Wolf spider).